Consider the following 91-residue polypeptide: Na(+)/H(+) antiporter subunit F (91 aa).

Helical transmembrane passes span isoleucine 5–glycine 27, isoleucine 34–methionine 53, and valine 63–isoleucine 82.

Belongs to the CPA3 antiporters (TC 2.A.63) subunit F family. Forms a heterooligomeric complex that consists of seven subunits: MrpA, MrpB, MrpC, MrpD, MrpE, MrpF and MrpG.

Its subcellular location is the cell membrane. Functionally, mnh complex is a Na(+)Li(+)/H(+) antiporter involved in Na(+) and/or Li(+) excretion and Na(+) resistance. Na(+)/H(+) antiport consumes a transmembrane electrical potential, and is thus inferred to be electrogenic. Does not transport K(+), Ca(2+) or Mg(2+). The polypeptide is Na(+)/H(+) antiporter subunit F (mrpF) (Alkalihalophilus pseudofirmus (strain ATCC BAA-2126 / JCM 17055 / OF4) (Bacillus pseudofirmus)).